The chain runs to 545 residues: Luciferin 4-monooxygenase (545 aa).

A Microbody targeting signal motif is present at residues 543-545; the sequence is SKL.

Belongs to the ATP-dependent AMP-binding enzyme family. Requires Mg(2+) as cofactor.

It is found in the peroxisome. It catalyses the reaction firefly D-luciferin + ATP + O2 = firefly oxyluciferin + hnu + AMP + CO2 + diphosphate. In terms of biological role, produces green light with a wavelength of 562 nm. The chain is Luciferin 4-monooxygenase from Photuris pensylvanica (Pennsylania firefly).